The primary structure comprises 358 residues: Magnesium-protoporphyrin IX monomethyl ester [oxidative] cyclase 2 (358 aa).

The protein belongs to the AcsF family. Fe cation serves as cofactor.

The enzyme catalyses Mg-protoporphyrin IX 13-monomethyl ester + 3 NADPH + 3 O2 + 2 H(+) = 3,8-divinyl protochlorophyllide a + 3 NADP(+) + 5 H2O. It functions in the pathway porphyrin-containing compound metabolism; chlorophyll biosynthesis (light-independent). Catalyzes the formation of the isocyclic ring in chlorophyll biosynthesis. Mediates the cyclase reaction, which results in the formation of divinylprotochlorophyllide (Pchlide) characteristic of all chlorophylls from magnesium-protoporphyrin IX 13-monomethyl ester (MgPMME). In Nostoc sp. (strain PCC 7120 / SAG 25.82 / UTEX 2576), this protein is Magnesium-protoporphyrin IX monomethyl ester [oxidative] cyclase 2.